The chain runs to 364 residues: N-acetyl-gamma-glutamyl-phosphate reductase (364 aa).

Cys157 is an active-site residue.

The protein belongs to the NAGSA dehydrogenase family. Type 1 subfamily.

It localises to the cytoplasm. The catalysed reaction is N-acetyl-L-glutamate 5-semialdehyde + phosphate + NADP(+) = N-acetyl-L-glutamyl 5-phosphate + NADPH + H(+). It functions in the pathway amino-acid biosynthesis; L-arginine biosynthesis; N(2)-acetyl-L-ornithine from L-glutamate: step 3/4. In terms of biological role, catalyzes the NADPH-dependent reduction of N-acetyl-5-glutamyl phosphate to yield N-acetyl-L-glutamate 5-semialdehyde. In Bifidobacterium longum (strain NCC 2705), this protein is N-acetyl-gamma-glutamyl-phosphate reductase.